Consider the following 311-residue polypeptide: Pyrimidine-specific ribonucleoside hydrolase RihA (311 aa).

His240 is an active-site residue.

This sequence belongs to the IUNH family. RihA subfamily.

In terms of biological role, hydrolyzes cytidine or uridine to ribose and cytosine or uracil, respectively. This is Pyrimidine-specific ribonucleoside hydrolase RihA from Salmonella gallinarum (strain 287/91 / NCTC 13346).